Reading from the N-terminus, the 73-residue chain is Large ribosomal subunit protein bL31 (73 aa).

It belongs to the bacterial ribosomal protein bL31 family. Type A subfamily. Part of the 50S ribosomal subunit.

Its function is as follows. Binds the 23S rRNA. This Bartonella tribocorum (strain CIP 105476 / IBS 506) protein is Large ribosomal subunit protein bL31.